The primary structure comprises 176 residues: Acireductone dioxygenase (176 aa).

Positions 1–21 (MKAYWYDNKPGDQREPHDSGR) are disordered. Residues 9–20 (KPGDQREPHDSG) are compositionally biased toward basic and acidic residues. Fe(2+)-binding residues include His-81, His-83, Glu-87, and His-126. His-81, His-83, Glu-87, and His-126 together coordinate Ni(2+).

It belongs to the acireductone dioxygenase (ARD) family. Fe(2+) serves as cofactor. It depends on Ni(2+) as a cofactor.

The protein localises to the cytoplasm. Its subcellular location is the nucleus. The catalysed reaction is 1,2-dihydroxy-5-(methylsulfanyl)pent-1-en-3-one + O2 = 4-methylsulfanyl-2-oxobutanoate + formate + 2 H(+). It catalyses the reaction 1,2-dihydroxy-5-(methylsulfanyl)pent-1-en-3-one + O2 = 3-(methylsulfanyl)propanoate + CO + formate + 2 H(+). Its pathway is amino-acid biosynthesis; L-methionine biosynthesis via salvage pathway; L-methionine from S-methyl-5-thio-alpha-D-ribose 1-phosphate: step 5/6. In terms of biological role, catalyzes 2 different reactions between oxygen and the acireductone 1,2-dihydroxy-3-keto-5-methylthiopentene (DHK-MTPene) depending upon the metal bound in the active site. Fe-containing acireductone dioxygenase (Fe-ARD) produces formate and 2-keto-4-methylthiobutyrate (KMTB), the alpha-ketoacid precursor of methionine in the methionine recycle pathway. Ni-containing acireductone dioxygenase (Ni-ARD) produces methylthiopropionate, carbon monoxide and formate, and does not lie on the methionine recycle pathway. The protein is Acireductone dioxygenase (adi1) of Aspergillus fumigatus (strain ATCC MYA-4609 / CBS 101355 / FGSC A1100 / Af293) (Neosartorya fumigata).